The following is a 239-amino-acid chain: Ribulose-phosphate 3-epimerase (239 aa).

Substrate is bound at residue S9. A divalent metal cation is bound by residues H34, D36, and H78. D36 functions as the Proton acceptor in the catalytic mechanism. Substrate-binding positions include H78, G154–G157, D183–G185, and G205–S207. Residue D183 participates in a divalent metal cation binding. D183 (proton donor) is an active-site residue.

The protein belongs to the ribulose-phosphate 3-epimerase family. Co(2+) serves as cofactor. It depends on Fe(2+) as a cofactor. Requires Mn(2+) as cofactor. The cofactor is Zn(2+).

It carries out the reaction D-ribulose 5-phosphate = D-xylulose 5-phosphate. The protein operates within carbohydrate degradation; pentose phosphate pathway; D-xylulose 5-phosphate from D-ribulose 5-phosphate (non-oxidative stage): step 1/1. Functionally, catalyzes the reversible epimerization of D-ribulose 5-phosphate to D-xylulose 5-phosphate. This Eremothecium gossypii (strain ATCC 10895 / CBS 109.51 / FGSC 9923 / NRRL Y-1056) (Yeast) protein is Ribulose-phosphate 3-epimerase (RPE1).